A 2431-amino-acid polypeptide reads, in one-letter code: Nucleoprotein TPR (2431 aa).

Residues Met1 to Pro48 are disordered. The interval Ala77–Glu87 is sufficient for interaction with TPR. The interval Leu88–Lys191 is necessary for interaction with HSF1. Residues Lys98–Leu444 adopt a coiled-coil conformation. Lys326, Lys386, and Lys419 each carry N6-acetyllysine. Ser453 is subject to Phosphoserine. Positions Glu486 to Val678 form a coiled coil. 3 positions are modified to N6-acetyllysine: Lys502, Lys531, and Lys551. The tract at residues Leu511–Asn587 is necessary for association to the NPC. Ser596, Ser597, and Ser706 each carry phosphoserine. A coiled-coil region spans residues Ser736–Thr1246. N6-acetyllysine is present on residues Lys787, Lys797, Lys822, and Lys829. Residues Leu989 to Gly998 show a composition bias toward polar residues. The segment at Leu989–Leu1011 is disordered. Basic and acidic residues predominate over residues Pro1002–Leu1011. Ser1259 is modified (phosphoserine). Coiled coils occupy residues Glu1289 to Lys1494 and Val1547 to Glu1700. Positions Gln1292–Met1394 are necessary for interaction with HSF1. Residues Glu1689–Pro1701 show a composition bias toward basic and acidic residues. The disordered stretch occupies residues Glu1689–Val1744. The segment covering Glu1703–Ala1722 has biased composition (polar residues). N6-acetyllysine is present on Lys1760. Position 1762 is a phosphothreonine (Thr1762). The span at Ser1873–Pro1898 shows a compositional bias: polar residues. The segment at Ser1873–His2193 is disordered. Residues Ser1882–Thr1937 are sufficient and essential for mediating its nuclear import. Residues Thr1937–Ala1951 show a composition bias toward acidic residues. Over residues Gln1954–Ser1963 the composition is skewed to polar residues. Ser1963 carries the phosphoserine modification. Over residues Gln1994 to Gly2005 the composition is skewed to low complexity. Composition is skewed to acidic residues over residues Asp2016–Asn2057 and Asp2067–Glu2088. Over residues Ala2100–Glu2132 the composition is skewed to polar residues. Ser2102, Ser2105, Ser2116, Ser2118, and Ser2141 each carry phosphoserine. An omega-N-methylarginine mark is found at Arg2174 and Arg2179. Phosphothreonine occurs at positions 2184 and 2205. Ser2223 carries the post-translational modification Phosphoserine. At Arg2231 the chain carries Omega-N-methylarginine. Residues Glu2295–Val2312 are compositionally biased toward polar residues. Residues Glu2295 to Asn2431 are disordered. Residues Thr2313–Thr2325 are compositionally biased toward low complexity. The segment covering Ala2327–Ser2340 has biased composition (acidic residues). The span at Glu2341 to Ile2351 shows a compositional bias: low complexity. A compositionally biased stretch (acidic residues) spans Ser2353–Asp2367. Residues Leu2368–Pro2388 show a composition bias toward low complexity. Arg2411, Arg2413, and Arg2422 each carry asymmetric dimethylarginine. A compositionally biased stretch (gly residues) spans Gly2420 to Asn2431.

The protein belongs to the TPR family. In terms of assembly, homodimer. Part of the nuclear pore complex (NPC). Associates with the XPO1/CRM1-mediated nuclear export complex, the Importin alpha/Importin beta receptor and the dynein 1 complex. Interacts (via C-terminal domain) with the KPNB1; the interaction occurs in a RanGTP-dependent manner. Interacts (via C-terminal region and phosphorylated form) with MAPK1/ERK2 (via phosphorylated form); the interaction requires dimerization of MAPK1/ERK2 and increases following EGF stimulation. Interacts with MAPK3/ERK1; the interaction increases following EGF stimulation. Interacts (via coiled coil region) with NUP153; the interaction is direct. Interacts with HSF1; the interaction increases in a stress-responsive manner and stimulates export of stress-induced HSP70 mRNA. Interacts with huntingtin/HTT; the interaction is inhibited by aggregated huntingtin/HTT forms with expanded polyglutamine stretch. Interacts with MAD1L1 (via N-terminal region), MAD2L1, and TTK; the interactions occurs in a microtubule-independent manner. Interacts (via middle region) with DYNLL1. Interacts with DCTN1, dynein, NUP153 and tubulin. Interacts with MTA1. Interacts with IFI204 (via C-terminal region). Interacts with IFI203. Interacts with ZC3HC1; this interaction mediates ZC3HC1 nuclear envelopes (NE)-association but also required for proper positioning of a substantial amount of TPR at the nuclear basket (NB). In terms of processing, phosphorylated. Phosphorylation occurs on serine and threonine residues (comprised in the C-terminal region) by MAPK1/ERK2 and stabilizes the interaction between these two proteins. In terms of tissue distribution, expressed in the heart, liver, kidney, spleen, lung and skeletal muscles.

The protein resides in the nucleus. It localises to the nucleus membrane. The protein localises to the nucleus envelope. Its subcellular location is the nuclear pore complex. It is found in the cytoplasm. The protein resides in the cytoskeleton. It localises to the spindle. The protein localises to the chromosome. Its subcellular location is the centromere. It is found in the kinetochore. Functionally, component of the nuclear pore complex (NPC), a complex required for the trafficking across the nuclear envelope. Functions as a scaffolding element in the nuclear phase of the NPC essential for normal nucleocytoplasmic transport of proteins and mRNAs, plays a role in the establishment of nuclear-peripheral chromatin compartmentalization in interphase, and in the mitotic spindle checkpoint signaling during mitosis. Involved in the quality control and retention of unspliced mRNAs in the nucleus; in association with NUP153, regulates the nuclear export of unspliced mRNA species bearing constitutive transport element (CTE) in a NXF1- and KHDRBS1-independent manner. Negatively regulates both the association of CTE-containing mRNA with large polyribosomes and translation initiation. Does not play any role in Rev response element (RRE)-mediated export of unspliced mRNAs. Implicated in nuclear export of mRNAs transcribed from heat shock gene promoters; associates both with chromatin in the HSP70 promoter and with mRNAs transcribed from this promoter under stress-induced conditions. Plays a limited role in the regulation of nuclear protein export. Modulates the nucleocytoplasmic transport of activated MAPK1/ERK2 and huntingtin/HTT and may serve as a docking site for the XPO1/CRM1-mediated nuclear export complex. Also plays a role as a structural and functional element of the perinuclear chromatin distribution; involved in the formation and/or maintenance of NPC-associated perinuclear heterochromatin exclusion zones (HEZs). Finally, acts as a spatial regulator of the spindle-assembly checkpoint (SAC) response ensuring a timely and effective recruitment of spindle checkpoint proteins like MAD1L1 and MAD2L1 to unattached kinetochore during the metaphase-anaphase transition before chromosome congression. Its N-terminus is involved in activation of oncogenic kinases. The protein is Nucleoprotein TPR of Mus musculus (Mouse).